We begin with the raw amino-acid sequence, 724 residues long: Degenerin mec-10 (724 aa).

Residues 1–15 (MNRNPRMSKFQPNPR) are compositionally biased toward polar residues. The disordered stretch occupies residues 1–22 (MNRNPRMSKFQPNPRSRSRFQD). Over 1-122 (MNRNPRMSKF…GQAPNSLYRA (122 aa)) the chain is Cytoplasmic. The chain crosses the membrane as a helical span at residues 123–143 (AWVFLLLICAIQFINQAVAVI). Topologically, residues 144–684 (QKYQKMDKIT…FGGHLGLWSG (541 aa)) are extracellular. The tract at residues 229 to 265 (KRGAGEKGTFEPANSACECDEEDGSNECEERSTEKPS) is disordered. The span at 246–255 (ECDEEDGSNE) shows a compositional bias: acidic residues. Over residues 256 to 265 (CEERSTEKPS) the composition is skewed to basic and acidic residues. Residues Asn293, Asn369, Asn463, Asn605, and Asn624 are each glycosylated (N-linked (GlcNAc...) asparagine). A helical transmembrane segment spans residues 685–705 (VSVMTCCEFVCLAFELIYMAI). The Cytoplasmic segment spans residues 706–724 (AHHINQQRIRRRENAANEY).

This sequence belongs to the amiloride-sensitive sodium channel (TC 1.A.6) family. As to quaternary structure, component of a non-voltage-gated amiloride-sensitive cation channel complex (also called the degenerin channel complex) composed of at least the mec-2, mec-4, mec-6 and mec-10 subunits; the complex mediates mechanotransduction in touch cells. Interacts with mec-4 and mec-6.

It localises to the cell membrane. In terms of biological role, subunit of an amiloride-sensitive cation channel (degenerin channel complex) permeable for sodium, potassium, lithium and N-methylglucamine, and required for mechanosensory transduction (touch sensitivity). Negatively regulates the turning step of male mating behavior. The protein is Degenerin mec-10 of Caenorhabditis elegans.